Here is a 226-residue protein sequence, read N- to C-terminus: MKKAVVLLSGGLDSTTTLAIARGNGFACYALSVDYGQRHAAELAAATRIGQLLQVCEHQFLKLDLTVLASSALTDPSVTVPIHGTNRGIPATYVPARNTIMLSLALAWAEVLGSQDIFIGVTAVDYSGYPDCRPDYIDAFEKMANLATKAGREGNLLKVHAPLINLPKHDIIRRGLELGIDYSMTVSCYQADASGWACGQCDACHIRRAGFAAANIPDPTYYQDKR.

Position 8–18 (8–18) interacts with ATP; it reads LSGGLDSTTTL. Residues Cys-188, Cys-198, Cys-201, and Cys-204 each contribute to the Zn(2+) site.

This sequence belongs to the QueC family. It depends on Zn(2+) as a cofactor.

The catalysed reaction is 7-carboxy-7-deazaguanine + NH4(+) + ATP = 7-cyano-7-deazaguanine + ADP + phosphate + H2O + H(+). It participates in purine metabolism; 7-cyano-7-deazaguanine biosynthesis. Functionally, catalyzes the ATP-dependent conversion of 7-carboxy-7-deazaguanine (CDG) to 7-cyano-7-deazaguanine (preQ(0)). The sequence is that of 7-cyano-7-deazaguanine synthase from Nitrosomonas eutropha (strain DSM 101675 / C91 / Nm57).